Consider the following 94-residue polypeptide: Pyrimidine/purine nucleoside phosphorylase (94 aa).

The protein belongs to the nucleoside phosphorylase PpnP family.

It catalyses the reaction a purine D-ribonucleoside + phosphate = a purine nucleobase + alpha-D-ribose 1-phosphate. The catalysed reaction is adenosine + phosphate = alpha-D-ribose 1-phosphate + adenine. The enzyme catalyses cytidine + phosphate = cytosine + alpha-D-ribose 1-phosphate. It carries out the reaction guanosine + phosphate = alpha-D-ribose 1-phosphate + guanine. It catalyses the reaction inosine + phosphate = alpha-D-ribose 1-phosphate + hypoxanthine. The catalysed reaction is thymidine + phosphate = 2-deoxy-alpha-D-ribose 1-phosphate + thymine. The enzyme catalyses uridine + phosphate = alpha-D-ribose 1-phosphate + uracil. It carries out the reaction xanthosine + phosphate = alpha-D-ribose 1-phosphate + xanthine. In terms of biological role, catalyzes the phosphorolysis of diverse nucleosides, yielding D-ribose 1-phosphate and the respective free bases. Can use uridine, adenosine, guanosine, cytidine, thymidine, inosine and xanthosine as substrates. Also catalyzes the reverse reactions. The protein is Pyrimidine/purine nucleoside phosphorylase of Pseudomonas fluorescens (strain Pf0-1).